Reading from the N-terminus, the 213-residue chain is Uridine kinase (213 aa).

15 to 22 (GASASGKS) is an ATP binding site.

This sequence belongs to the uridine kinase family.

The protein localises to the cytoplasm. It carries out the reaction uridine + ATP = UMP + ADP + H(+). The catalysed reaction is cytidine + ATP = CMP + ADP + H(+). Its pathway is pyrimidine metabolism; CTP biosynthesis via salvage pathway; CTP from cytidine: step 1/3. The protein operates within pyrimidine metabolism; UMP biosynthesis via salvage pathway; UMP from uridine: step 1/1. This Salmonella agona (strain SL483) protein is Uridine kinase.